Reading from the N-terminus, the 532-residue chain is MATVAERCPICLEDPSNYSMALPCLHAFCYVCITRWIRQNPTCPLCKVPVESVVHTIESDSEFKETKVSVDFDYDSEEDEDSFEGQFLAVDSGDAPANISAWNGPMAFVPLNANGTAGAPRLQPLVDWLVERLDQLFETPELALVMRNIVMDTLCEHGCNEEELTRQFWPMFHEDTVPFVTDLIVQAELCVASRPILPIARGRGVEYIDSSSSSSSSEEETDSDIEVDPNNLTDPEDTSDETSTDNSSAQAPRQEDSRPARARPGPPTRGRRRGRRPAAPGPASRRSARLRRRQPRTNSRTNGGDNGEIIDLTLDSDGDTEPADVSGSLNTTDQPVLIPDEEEAAPASPHTSSNSAIICLVSELTPESEEPPRDQPVAPSGSSAGERPMRPRCSLREFARRFMALAPRDSSTSEAAGPSRLGAGPRATEPFSVAVVLVDRSSEGAGLFGGRFAQHVRRRTEDESARRRGNVLLRPRRQSVPPVPYPDIASTSPLIRQGGQRVRDLQRAFQTQPAEPEEMRCPHNCQRYRRNQ.

Zn(2+) is bound by residues C8, C11, C24, H26, C29, C32, C43, and C46. Residues 8-47 (CPICLEDPSNYSMALPCLHAFCYVCITRWIRQNPTCPLCK) form an RING-type zinc finger. Disordered stretches follow at residues 206 to 391 (EYID…PMRP), 406 to 426 (APRD…AGPR), 461 to 498 (EDES…IRQG), and 510 to 532 (QTQP…RRNQ). Acidic residues-rich tracts occupy residues 217–227 (SEEETDSDIEV) and 234–243 (DPEDTSDETS). Residues 286-295 (RSARLRRRQP) are compositionally biased toward basic residues.

Post-translationally, auto-ubiquitinated.

It carries out the reaction S-ubiquitinyl-[E2 ubiquitin-conjugating enzyme]-L-cysteine + [acceptor protein]-L-lysine = [E2 ubiquitin-conjugating enzyme]-L-cysteine + N(6)-ubiquitinyl-[acceptor protein]-L-lysine.. In terms of biological role, evades nuclear antiviral defenses triggered by dsDNA viruses. Acts during the initial stages of lytic infection and the reactivation of latent viral genome. Prevents the antiviral effect of nuclear bodies by degrading host PML and SP100. The polypeptide is E3 ubiquitin-protein ligase ICP0 (63) (Equus caballus (Horse)).